The sequence spans 855 residues: Potassium transporter 13 (855 aa).

The disordered stretch occupies residues 1 to 67; the sequence is MFHVEEESSG…EMDSDEEDDN (67 aa). The Cytoplasmic portion of the chain corresponds to 1 to 105; sequence MFHVEEESSG…EIEDTGIGKK (105 aa). The segment covering 36–51 has biased composition (acidic residues); it reads EKDDYEVNEDYDDDGY. Residues 106–126 traverse the membrane as a helical segment; it reads LILALQTLGVVFGDIGTSPLY. Residues 127-142 lie on the Extracellular side of the membrane; sequence TFTVMFRRSPINDKED. Residues 143–163 traverse the membrane as a helical segment; that stretch reads IIGALSLVIYTLILIPLVKYV. At 164 to 233 the chain is on the cytoplasmic side; the sequence is HFVLWANDDG…RLEASMALKK (70 aa). The helical transmembrane segment at 234-254 threads the bilayer; the sequence is LLLILVLAGTAMVIADAVVTP. The Extracellular segment spans residues 255–268; it reads AMSVMSAIGGLKVG. A helical membrane pass occupies residues 269-289; it reads VGVIEQDQVVVISVSFLVILF. Residues 290–298 are Cytoplasmic-facing; sequence SVQKYGTSK. The helical transmembrane segment at 299–319 threads the bilayer; it reads LGLVLGPALLLWFFCLAGIGI. Topologically, residues 320 to 346 are extracellular; the sequence is YNLVKYDSSVFKAFNPAYIYFFFKRNS. Residues 347–367 form a helical membrane-spanning segment; that stretch reads VNAWYALGGCVLCATGSEAMF. Topologically, residues 368–379 are cytoplasmic; that stretch reads ADLSYFSVHSIQ. A helical membrane pass occupies residues 380-400; that stretch reads LTFILLVLPCLLLGYLGQAAY. Residues 401 to 415 lie on the Extracellular side of the membrane; it reads LSENFSAAGDAFFSS. The N-linked (GlcNAc...) asparagine glycan is linked to Asn404. Residues 416 to 436 form a helical membrane-spanning segment; the sequence is VPSSLFWPVFLISNVAALIAS. The Cytoplasmic portion of the chain corresponds to 437–467; that stretch reads RAMTTATFTCIKQSIALGCFPRLKIIHTSKK. A helical transmembrane segment spans residues 468-488; sequence FIGQIYIPVLNWSLLVVCLIV. Residues 489–503 lie on the Extracellular side of the membrane; sequence VCSTSNIFAIGNAYG. A helical transmembrane segment spans residues 504–524; the sequence is IAELGIMMTTTILVTLIMLLI. The Cytoplasmic portion of the chain corresponds to 525 to 528; the sequence is WQTN. Residues 529 to 549 traverse the membrane as a helical segment; the sequence is IIVVSMFAIVSLIVELVFFSS. The Extracellular portion of the chain corresponds to 550–553; sequence VCSS. A helical transmembrane segment spans residues 554-574; that stretch reads VADGSWIILVFATIMFLIMFV. The Cytoplasmic segment spans residues 575–855; that stretch reads WNYGSKLKYE…LMQVGMTYMV (281 aa). Ser766 bears the Phosphoserine mark.

The protein belongs to the HAK/KUP transporter (TC 2.A.72.3) family.

The protein resides in the cell membrane. Probable potassium transporter. This chain is Potassium transporter 13 (POT13), found in Arabidopsis thaliana (Mouse-ear cress).